A 263-amino-acid chain; its full sequence is Acidic leucine-rich nuclear phosphoprotein 32 family member E (263 aa).

LRR repeat units follow at residues 43 to 64, 65 to 84, and 89 to 110; these read ELEF…PKLP, KLRK…DVLT, and NITY…EALA. The 39-residue stretch at 123–161 folds into the LRRCT domain; that stretch reads CEITNLEDYRENIFQRLSQITYLDGFDQEDNEAPDSEED. The tract at residues 146–263 is disordered; it reads DGFDQEDNEA…PEDEGDEDED (118 aa). Acidic residues-rich tracts occupy residues 148–172, 180–203, and 214–242; these read FDQE…DDEE, AEED…EEEV, and RDEE…DEAA. The segment at 202-263 is ZID domain; it reads EVGLSYLMKE…PEDEGDEDED (62 aa).

It belongs to the ANP32 family. In terms of assembly, component of a SWR1-like complex. Interacts with H2A.Z/H2AZ1. Phosphorylated. The phosphorylation is nuclear localization signal (NLS)-dependent.

Its subcellular location is the cytoplasm. The protein localises to the nucleus. Functionally, histone chaperone that specifically mediates the genome-wide removal of histone H2A.Z/H2AZ1 from the nucleosome: removes H2A.Z/H2AZ1 from its normal sites of deposition, especially from enhancer and insulator regions. Not involved in deposition of H2A.Z/H2AZ1 in the nucleosome. May stabilize the evicted H2A.Z/H2AZ1-H2B dimer, thus shifting the equilibrium towards dissociation and the off-chromatin state. Inhibits activity of protein phosphatase 2A (PP2A). Does not inhibit protein phosphatase 1. May play a role in cerebellar development and synaptogenesis. In Xenopus laevis (African clawed frog), this protein is Acidic leucine-rich nuclear phosphoprotein 32 family member E (anp32e).